The primary structure comprises 262 residues: Phosphonates import ATP-binding protein PhnC (262 aa).

The 249-residue stretch at 5-253 (IRVEKLAKTF…RFDHLYRSIN (249 aa)) folds into the ABC transporter domain. 37 to 44 (GPSGSGKS) provides a ligand contact to ATP.

Belongs to the ABC transporter superfamily. Phosphonates importer (TC 3.A.1.9.1) family. The complex is composed of two ATP-binding proteins (PhnC), two transmembrane proteins (PhnE) and a solute-binding protein (PhnD).

It is found in the cell inner membrane. It catalyses the reaction phosphonate(out) + ATP + H2O = phosphonate(in) + ADP + phosphate + H(+). Functionally, part of the ABC transporter complex PhnCDE involved in phosphonates import. Responsible for energy coupling to the transport system. This chain is Phosphonates import ATP-binding protein PhnC, found in Shigella sonnei (strain Ss046).